The following is a 394-amino-acid chain: Chaperone protein DnaJ (394 aa).

One can recognise a J domain in the interval 4-68 (DYYEILGVSR…ELKARYDRFG (65 aa)). Residues 136–218 (GGEKQIRISH…CNGEGLAQTT (83 aa)) form a CR-type zinc finger. Zn(2+)-binding residues include cysteine 149, cysteine 152, cysteine 166, cysteine 169, cysteine 192, cysteine 195, cysteine 206, and cysteine 209. 4 CXXCXGXG motif repeats span residues 149–156 (CNVCGGSG), 166–173 (CPTCGGSG), 192–199 (CPTCGGSG), and 206–213 (CYNCNGEG).

Belongs to the DnaJ family. Homodimer. The cofactor is Zn(2+).

It localises to the cytoplasm. Participates actively in the response to hyperosmotic and heat shock by preventing the aggregation of stress-denatured proteins and by disaggregating proteins, also in an autonomous, DnaK-independent fashion. Unfolded proteins bind initially to DnaJ; upon interaction with the DnaJ-bound protein, DnaK hydrolyzes its bound ATP, resulting in the formation of a stable complex. GrpE releases ADP from DnaK; ATP binding to DnaK triggers the release of the substrate protein, thus completing the reaction cycle. Several rounds of ATP-dependent interactions between DnaJ, DnaK and GrpE are required for fully efficient folding. Also involved, together with DnaK and GrpE, in the DNA replication of plasmids through activation of initiation proteins. In Synechococcus sp. (strain JA-2-3B'a(2-13)) (Cyanobacteria bacterium Yellowstone B-Prime), this protein is Chaperone protein DnaJ.